Consider the following 1203-residue polypeptide: Exonuclease/helicase subunit RexA (1203 aa).

The UvrD-like helicase ATP-binding domain maps to 4–472; sequence VKLTPEQNEA…IRLKENFRSR (469 aa). 25-32 lines the ATP pocket; sequence ASAGSGKT. The UvrD-like helicase C-terminal domain occupies 503–785; it reads VQGNISDYPV…RVMTFHKSKG (283 aa).

Belongs to the helicase family. AddA subfamily. As to quaternary structure, heterodimer of RexA (AddA) and RexB. Mg(2+) is required as a cofactor.

The catalysed reaction is Couples ATP hydrolysis with the unwinding of duplex DNA by translocating in the 3'-5' direction.. It carries out the reaction ATP + H2O = ADP + phosphate + H(+). Functionally, the heterodimer acts both as an ATP-dependent DNA helicase and an ATP-dependent, dual-direction single-stranded exonuclease. Recognizes the L.lactis chi site (5'-GCGCGTG-3'), which stimulates homologous recombination. The RexA (AddA) nuclease domain is required for chi fragment generation; this subunit has 3'-&gt;5' exonuclease activity and probably also performs the helicase function. This is Exonuclease/helicase subunit RexA from Lactococcus lactis subsp. cremoris (strain MG1363).